Reading from the N-terminus, the 258-residue chain is Small ribosomal subunit protein mS23 (258 aa).

This sequence belongs to the mitochondrion-specific ribosomal protein mS23 family. As to quaternary structure, component of the mitochondrial small ribosomal subunit.

It is found in the mitochondrion. The chain is Small ribosomal subunit protein mS23 (rsm25) from Aspergillus fumigatus (strain ATCC MYA-4609 / CBS 101355 / FGSC A1100 / Af293) (Neosartorya fumigata).